We begin with the raw amino-acid sequence, 256 residues long: Calsenilin (256 aa).

Residues 1-20 form a disordered region; it reads MQPAKEVTKASDGSLLGDLG. Ser-14 is subject to Phosphoserine. A Glycyl lysine isopeptide (Lys-Gly) (interchain with G-Cter in SUMO1) cross-link involves residue Lys-26. S-palmitoyl cysteine attachment occurs at residues Cys-45 and Cys-46. A Phosphoserine modification is found at Ser-60. Ser-63 carries the phosphoserine; by CK1 modification. Positions 67–123 constitute an EF-hand 1; degenerate domain; it reads LELSTVRHQPEGLDQLQAQTKFTKKELQSLYRGFKNECPTGLVDEDTFKLIYAQFFP. Lys-90 participates in a covalent cross-link: Glycyl lysine isopeptide (Lys-Gly) (interchain with G-Cter in SUMO1). EF-hand domains follow at residues 126-161, 162-197, and 210-245; these read DATTYAHFLFNAFDADGNGAIHFEDFVVGLSILLRG, TVHEKLKWAFNLYDINKDGYITKEEMLAIMKSIYDM, and APAEHVERFFEKMDRNQDGVVTIEEFLEACQKDENI. Ca(2+) contacts are provided by Asp-175, Asn-177, Asp-179, Tyr-181, Glu-186, Asp-223, Asn-225, Asp-227, and Glu-234. Residues 243 to 256 are interaction with KCND2; that stretch reads ENIMSSMQLFENVI.

Belongs to the recoverin family. As to quaternary structure, binds to DNA as a homomultimer. Dimerization is induced by binding to calcium. Interacts with the C-terminus of PSEN1 and PSEN2 and with PSEN2 CTF subunit. Associates with KCN1. Component of heteromultimeric potassium channels. Identified in potassium channel complexes containing KCND1, KCND2, KCND3, KCNIP1, KCNIP2, KCNIP3, KCNIP4, DPP6 and DPP10. Interacts with KCND2 and KCND3. Post-translationally, palmitoylated. Palmitoylation enhances association with the plasma membrane. In terms of processing, proteolytically cleaved by caspase-3. Phosphorylation at Ser-63 inhibits cleavage by CASP3. Highly expressed in brain. Widely expressed at lower levels. Expression levels are elevated in brain cortex regions affected by Alzheimer disease.

Its subcellular location is the cytoplasm. It localises to the cell membrane. The protein resides in the endoplasmic reticulum. The protein localises to the golgi apparatus. It is found in the nucleus. Its function is as follows. Calcium-dependent transcriptional repressor that binds to the DRE element of genes including PDYN and FOS. Affinity for DNA is reduced upon binding to calcium and enhanced by binding to magnesium. Seems to be involved in nociception. Functionally, regulatory subunit of Kv4/D (Shal)-type voltage-gated rapidly inactivating A-type potassium channels, such as KCND2/Kv4.2 and KCND3/Kv4.3. Modulates channel expression at the cell membrane, gating characteristics, inactivation kinetics and rate of recovery from inactivation in a calcium-dependent and isoform-specific manner. May play a role in the regulation of PSEN2 proteolytic processing and apoptosis. Together with PSEN2 involved in modulation of amyloid-beta formation. The sequence is that of Calsenilin (KCNIP3) from Homo sapiens (Human).